An 89-amino-acid chain; its full sequence is Alpha-latrotoxin associated low molecular weight protein SGV242-280 (89 aa).

An N-terminal signal peptide occupies residues 1-18; it reads MSKLHFLILLSVIVSVFC.

Belongs to the arthropod CHH/MIH/GIH/VIH hormone family. Expressed by the venom gland.

The protein resides in the secreted. Functionally, may increase the toxicity of alpha-latrotoxin and/or other venom components. Is non-toxic to mice and to the cockroach Periplaneta americana. The protein is Alpha-latrotoxin associated low molecular weight protein SGV242-280 of Steatoda grossa (False black widow).